The chain runs to 354 residues: Uroporphyrinogen decarboxylase (354 aa).

Residues 27-31 (RQAGR), Asp-77, Tyr-154, Thr-209, and His-327 each bind substrate.

This sequence belongs to the uroporphyrinogen decarboxylase family. In terms of assembly, homodimer.

It localises to the cytoplasm. The enzyme catalyses uroporphyrinogen III + 4 H(+) = coproporphyrinogen III + 4 CO2. It functions in the pathway porphyrin-containing compound metabolism; protoporphyrin-IX biosynthesis; coproporphyrinogen-III from 5-aminolevulinate: step 4/4. Catalyzes the decarboxylation of four acetate groups of uroporphyrinogen-III to yield coproporphyrinogen-III. This Pseudomonas putida (strain W619) protein is Uroporphyrinogen decarboxylase.